Reading from the N-terminus, the 1059-residue chain is Carbamoyl phosphate synthase large chain (1059 aa).

Residues 1–401 are carboxyphosphate synthetic domain; it reads MPKRTDIHKI…ALLKAVASLE (401 aa). ATP contacts are provided by Arg-129, Arg-169, Gly-175, Gly-176, Lys-208, Ile-210, Glu-215, Gly-241, Ile-242, His-243, Gln-284, and Glu-298. Residues 133 to 327 enclose the ATP-grasp 1 domain; that stretch reads KELMQELGEP…IAKLAAKIAV (195 aa). Gln-284, Glu-298, and Asn-300 together coordinate Mg(2+). Residues Gln-284, Glu-298, and Asn-300 each contribute to the Mn(2+) site. The tract at residues 402 to 546 is oligomerization domain; the sequence is IDQKDLLSKE…YSTYETENES (145 aa). A carbamoyl phosphate synthetic domain region spans residues 547–929; sequence RRSAKPSVLV…ALYKAFAGAG (383 aa). Positions 671-861 constitute an ATP-grasp 2 domain; the sequence is DQVIKDLNLR…MAQLATKVIL (191 aa). ATP contacts are provided by Arg-707, Ala-746, Leu-748, Glu-752, Gly-777, Val-778, His-779, Ser-780, Gln-820, and Glu-832. 3 residues coordinate Mg(2+): Gln-820, Glu-832, and Asn-834. Positions 820, 832, and 834 each coordinate Mn(2+). The 130-residue stretch at 930 to 1059 folds into the MGS-like domain; the sequence is MEVPDNGAVL…EMTSFKTTEL (130 aa). Residues 930-1059 are allosteric domain; sequence MEVPDNGAVL…EMTSFKTTEL (130 aa).

Belongs to the CarB family. As to quaternary structure, composed of two chains; the small (or glutamine) chain promotes the hydrolysis of glutamine to ammonia, which is used by the large (or ammonia) chain to synthesize carbamoyl phosphate. Tetramer of heterodimers (alpha,beta)4. The cofactor is Mg(2+). Requires Mn(2+) as cofactor.

The catalysed reaction is hydrogencarbonate + L-glutamine + 2 ATP + H2O = carbamoyl phosphate + L-glutamate + 2 ADP + phosphate + 2 H(+). It catalyses the reaction hydrogencarbonate + NH4(+) + 2 ATP = carbamoyl phosphate + 2 ADP + phosphate + 2 H(+). It functions in the pathway amino-acid biosynthesis; L-arginine biosynthesis; carbamoyl phosphate from bicarbonate: step 1/1. Its pathway is pyrimidine metabolism; UMP biosynthesis via de novo pathway; (S)-dihydroorotate from bicarbonate: step 1/3. Functionally, large subunit of the glutamine-dependent carbamoyl phosphate synthetase (CPSase). CPSase catalyzes the formation of carbamoyl phosphate from the ammonia moiety of glutamine, carbonate, and phosphate donated by ATP, constituting the first step of 2 biosynthetic pathways, one leading to arginine and/or urea and the other to pyrimidine nucleotides. The large subunit (synthetase) binds the substrates ammonia (free or transferred from glutamine from the small subunit), hydrogencarbonate and ATP and carries out an ATP-coupled ligase reaction, activating hydrogencarbonate by forming carboxy phosphate which reacts with ammonia to form carbamoyl phosphate. The sequence is that of Carbamoyl phosphate synthase large chain from Limosilactobacillus fermentum (strain NBRC 3956 / LMG 18251) (Lactobacillus fermentum).